The chain runs to 508 residues: Non-structural protein 1 (508 aa).

Positions 424–453 are enriched in polar residues; the sequence is NTESTTTNNAQSPVSDPVNASANVKTSPAG. Residues 424 to 464 are disordered; sequence NTESTTTNNAQSPVSDPVNASANVKTSPAGTHTDESVMKKE. A compositionally biased stretch (basic and acidic residues) spans 455–464; that stretch reads HTDESVMKKE.

The polypeptide is Non-structural protein 1 (Segment-5) (Banna virus (BAV)).